Here is a 362-residue protein sequence, read N- to C-terminus: tRNA-specific 2-thiouridylase MnmA (362 aa).

ATP is bound by residues 9-16 (GMSGGVDS) and Met-35. Residues 95-97 (NPD) are interaction with target base in tRNA. Cys-100 serves as the catalytic Nucleophile. Cys-100 and Cys-196 are oxidised to a cystine. Gly-124 contacts ATP. Positions 146–148 (KDQ) are interaction with tRNA. Cys-196 (cysteine persulfide intermediate) is an active-site residue. The segment at 308-309 (RY) is interaction with tRNA.

The protein belongs to the MnmA/TRMU family.

The protein resides in the cytoplasm. It carries out the reaction S-sulfanyl-L-cysteinyl-[protein] + uridine(34) in tRNA + AH2 + ATP = 2-thiouridine(34) in tRNA + L-cysteinyl-[protein] + A + AMP + diphosphate + H(+). Its function is as follows. Catalyzes the 2-thiolation of uridine at the wobble position (U34) of tRNA, leading to the formation of s(2)U34. The polypeptide is tRNA-specific 2-thiouridylase MnmA (Nitrosomonas europaea (strain ATCC 19718 / CIP 103999 / KCTC 2705 / NBRC 14298)).